Reading from the N-terminus, the 463-residue chain is Methionine aminopeptidase 2-2 (463 aa).

A disordered region spans residues 1 to 107; sequence MGAKTFEGGD…VPLSQLFPDG (107 aa). A compositionally biased stretch (acidic residues) spans 37–53; that stretch reads EDGDGEFGTDDDDDGDG. Over residues 69–83 the composition is skewed to basic residues; the sequence is PKKRKRSKKKKSNKK. Residue His-215 coordinates substrate. Residues Asp-236, Asp-247, and His-316 each coordinate a divalent metal cation. His-324 lines the substrate pocket. A divalent metal cation-binding residues include Glu-349 and Glu-444.

Belongs to the peptidase M24A family. Methionine aminopeptidase eukaryotic type 2 subfamily. It depends on Co(2+) as a cofactor. The cofactor is Zn(2+). Requires Mn(2+) as cofactor. Fe(2+) serves as cofactor.

Its subcellular location is the cytoplasm. The catalysed reaction is Release of N-terminal amino acids, preferentially methionine, from peptides and arylamides.. Cotranslationally removes the N-terminal methionine from nascent proteins. The N-terminal methionine is often cleaved when the second residue in the primary sequence is small and uncharged (Met-Ala-, Cys, Gly, Pro, Ser, Thr, or Val). In Talaromyces marneffei (strain ATCC 18224 / CBS 334.59 / QM 7333) (Penicillium marneffei), this protein is Methionine aminopeptidase 2-2.